Reading from the N-terminus, the 363-residue chain is 3-dehydroquinate synthase (363 aa).

Residues Asp-75–Lys-80, Gly-109–Asp-113, Thr-133–Ser-134, Lys-146, Lys-155, and Thr-173–Thr-176 each bind NAD(+). Zn(2+) is bound by residues Glu-188, His-251, and His-267.

The protein belongs to the sugar phosphate cyclases superfamily. Dehydroquinate synthase family. Co(2+) serves as cofactor. It depends on Zn(2+) as a cofactor. The cofactor is NAD(+).

The protein localises to the cytoplasm. It catalyses the reaction 7-phospho-2-dehydro-3-deoxy-D-arabino-heptonate = 3-dehydroquinate + phosphate. It functions in the pathway metabolic intermediate biosynthesis; chorismate biosynthesis; chorismate from D-erythrose 4-phosphate and phosphoenolpyruvate: step 2/7. Functionally, catalyzes the conversion of 3-deoxy-D-arabino-heptulosonate 7-phosphate (DAHP) to dehydroquinate (DHQ). The sequence is that of 3-dehydroquinate synthase from Pseudarthrobacter chlorophenolicus (strain ATCC 700700 / DSM 12829 / CIP 107037 / JCM 12360 / KCTC 9906 / NCIMB 13794 / A6) (Arthrobacter chlorophenolicus).